Consider the following 124-residue polypeptide: Small ribosomal subunit protein uS12 (124 aa).

Residues 1–32 form a disordered region; sequence MPTINQLVRKGRRDKTAKVKTAALKGSPQRRG. A 3-methylthioaspartic acid modification is found at aspartate 89. A disordered region spans residues 104 to 124; the sequence is TQGVKGRKQARSRYGAKKEKS. A compositionally biased stretch (basic residues) spans 108-118; sequence KGRKQARSRYG.

Belongs to the universal ribosomal protein uS12 family. In terms of assembly, part of the 30S ribosomal subunit. Contacts proteins S8 and S17. May interact with IF1 in the 30S initiation complex.

With S4 and S5 plays an important role in translational accuracy. Functionally, interacts with and stabilizes bases of the 16S rRNA that are involved in tRNA selection in the A site and with the mRNA backbone. Located at the interface of the 30S and 50S subunits, it traverses the body of the 30S subunit contacting proteins on the other side and probably holding the rRNA structure together. The combined cluster of proteins S8, S12 and S17 appears to hold together the shoulder and platform of the 30S subunit. In Rhodococcus jostii (strain RHA1), this protein is Small ribosomal subunit protein uS12.